Consider the following 667-residue polypeptide: Long-chain-fatty-acid--CoA ligase ACSBG2 (667 aa).

Residues 1-14 are compositionally biased toward basic and acidic residues; the sequence is MTQEKKAEDPDRGM. Positions 1-20 are disordered; it reads MTQEKKAEDPDRGMDTTSAA. ATP-binding positions include 227–235, 418–423, aspartate 496, arginine 511, and arginine 624; these read TSGTTGSPK and EIYGMT.

The protein belongs to the ATP-dependent AMP-binding enzyme family. Bubblegum subfamily.

The protein localises to the cytoplasm. It localises to the membrane. It carries out the reaction a long-chain fatty acid + ATP + CoA = a long-chain fatty acyl-CoA + AMP + diphosphate. The catalysed reaction is (5Z,8Z,11Z,14Z)-eicosatetraenoate + ATP + CoA = (5Z,8Z,11Z,14Z)-eicosatetraenoyl-CoA + AMP + diphosphate. The enzyme catalyses hexadecanoate + ATP + CoA = hexadecanoyl-CoA + AMP + diphosphate. It catalyses the reaction (9Z)-octadecenoate + ATP + CoA = (9Z)-octadecenoyl-CoA + AMP + diphosphate. It carries out the reaction (9Z,12Z)-octadecadienoate + ATP + CoA = (9Z,12Z)-octadecadienoyl-CoA + AMP + diphosphate. The catalysed reaction is tetracosanoate + ATP + CoA = tetracosanoyl-CoA + AMP + diphosphate. Functionally, catalyzes the conversion of fatty acids such as long chain and very long-chain fatty acids to their active form acyl-CoAs for both synthesis of cellular lipids, and degradation via beta-oxidation. Can activate diverse saturated, monosaturated and polyunsaturated fatty acids. Has increased ability to activate oleic and linoleic acid. May play a role in spermatogenesis. This is Long-chain-fatty-acid--CoA ligase ACSBG2 from Rattus norvegicus (Rat).